Reading from the N-terminus, the 444-residue chain is Phosphoglucosamine mutase (444 aa).

Serine 101 functions as the Phosphoserine intermediate in the catalytic mechanism. 4 residues coordinate Mg(2+): serine 101, aspartate 240, aspartate 242, and aspartate 244. At serine 101 the chain carries Phosphoserine.

It belongs to the phosphohexose mutase family. Requires Mg(2+) as cofactor. Activated by phosphorylation.

It catalyses the reaction alpha-D-glucosamine 1-phosphate = D-glucosamine 6-phosphate. Functionally, catalyzes the conversion of glucosamine-6-phosphate to glucosamine-1-phosphate. This is Phosphoglucosamine mutase from Sphingopyxis alaskensis (strain DSM 13593 / LMG 18877 / RB2256) (Sphingomonas alaskensis).